A 473-amino-acid polypeptide reads, in one-letter code: Ribosomal RNA small subunit methyltransferase F (473 aa).

Residues 123–129, glutamate 147, aspartate 174, and aspartate 192 contribute to the S-adenosyl-L-methionine site; that span reads AAAPGSK. Cysteine 245 (nucleophile) is an active-site residue.

The protein belongs to the class I-like SAM-binding methyltransferase superfamily. RsmB/NOP family.

The protein localises to the cytoplasm. The catalysed reaction is cytidine(1407) in 16S rRNA + S-adenosyl-L-methionine = 5-methylcytidine(1407) in 16S rRNA + S-adenosyl-L-homocysteine + H(+). Functionally, specifically methylates the cytosine at position 1407 (m5C1407) of 16S rRNA. The protein is Ribosomal RNA small subunit methyltransferase F of Vibrio atlanticus (strain LGP32) (Vibrio splendidus (strain Mel32)).